Consider the following 143-residue polypeptide: S-adenosylmethionine decarboxylase proenzyme (143 aa).

Ser-66 (schiff-base intermediate with substrate; via pyruvic acid) is an active-site residue. At Ser-66 the chain carries Pyruvic acid (Ser); by autocatalysis. Residue His-71 is the Proton acceptor; for processing activity of the active site. Residue Cys-86 is the Proton donor; for catalytic activity of the active site.

The protein belongs to the prokaryotic AdoMetDC family. Type 1 subfamily. As to quaternary structure, heterotetramer of two alpha and two beta chains arranged as a dimer of alpha/beta heterodimers. Pyruvate serves as cofactor. Post-translationally, is synthesized initially as an inactive proenzyme. Formation of the active enzyme involves a self-maturation process in which the active site pyruvoyl group is generated from an internal serine residue via an autocatalytic post-translational modification. Two non-identical subunits are generated from the proenzyme in this reaction, and the pyruvate is formed at the N-terminus of the alpha chain, which is derived from the carboxyl end of the proenzyme. The post-translation cleavage follows an unusual pathway, termed non-hydrolytic serinolysis, in which the side chain hydroxyl group of the serine supplies its oxygen atom to form the C-terminus of the beta chain, while the remainder of the serine residue undergoes an oxidative deamination to produce ammonia and the pyruvoyl group blocking the N-terminus of the alpha chain.

It catalyses the reaction S-adenosyl-L-methionine + H(+) = S-adenosyl 3-(methylsulfanyl)propylamine + CO2. Its pathway is amine and polyamine biosynthesis; S-adenosylmethioninamine biosynthesis; S-adenosylmethioninamine from S-adenosyl-L-methionine: step 1/1. Catalyzes the decarboxylation of S-adenosylmethionine to S-adenosylmethioninamine (dcAdoMet), the propylamine donor required for the synthesis of the polyamines spermine and spermidine from the diamine putrescine. This Thermococcus gammatolerans (strain DSM 15229 / JCM 11827 / EJ3) protein is S-adenosylmethionine decarboxylase proenzyme.